Here is a 147-residue protein sequence, read N- to C-terminus: 3-dehydroquinate dehydratase (147 aa).

The active-site Proton acceptor is the tyrosine 23. 3 residues coordinate substrate: asparagine 75, histidine 81, and aspartate 88. Residue histidine 101 is the Proton donor of the active site. Substrate contacts are provided by residues 102–103 (LS) and arginine 112.

This sequence belongs to the type-II 3-dehydroquinase family. In terms of assembly, homododecamer.

The catalysed reaction is 3-dehydroquinate = 3-dehydroshikimate + H2O. It participates in metabolic intermediate biosynthesis; chorismate biosynthesis; chorismate from D-erythrose 4-phosphate and phosphoenolpyruvate: step 3/7. Catalyzes a trans-dehydration via an enolate intermediate. The chain is 3-dehydroquinate dehydratase from Hahella chejuensis (strain KCTC 2396).